A 703-amino-acid chain; its full sequence is Zinc finger protein 750 (703 aa).

Residues 25–51 (YKCFQCPFTCNEKSHLFNHMKYGLCKN) form a CCHC-type zinc finger. Zn(2+)-binding residues include cysteine 27, cysteine 30, histidine 43, and cysteine 49. 4 disordered regions span residues 60–96 (DRVPKCSKPNSSDPKQTNQPDPVVKPTSSKPVPSGLS), 121–147 (GPHRCLGQKPTPHKEAAPPSPAPEAAV), 362–617 (PSKL…EQKQ), and 633–703 (NVEP…TRVS). Polar residues predominate over residues 67–78 (KPNSSDPKQTNQ). Residues 79–93 (PDPVVKPTSSKPVPS) show a composition bias toward low complexity. Residues 375-399 (TELEKQSPTPEAKEPSKDGQRDTEG) are compositionally biased toward basic and acidic residues. Polar residues predominate over residues 418–428 (SPTNFTQTSQP). The span at 583 to 592 (SSGDGPDPSS) shows a compositional bias: low complexity. Residues 605–616 (QDIRAADSDEQK) are compositionally biased toward basic and acidic residues.

It localises to the nucleus. In terms of biological role, transcription factor involved in epidermis differentiation. Required for terminal epidermal differentiation: acts downstream of p63/TP63 and activates expression of late epidermal differentiation genes. Specifically binds to the promoter of KLF4 and promotes its expression. The chain is Zinc finger protein 750 (ZNF750) from Bos taurus (Bovine).